A 44-amino-acid chain; its full sequence is MRDFKTYLSVAPVLSTLSLGFFAGFLIEINRFFPDALTFPFFSF.

Residues 7-27 (YLSVAPVLSTLSLGFFAGFLI) traverse the membrane as a helical segment.

The protein belongs to the PsaJ family.

The protein resides in the plastid membrane. Its function is as follows. May help in the organization of the PsaE and PsaF subunits. The polypeptide is Photosystem I reaction center subunit IX (Cuscuta obtusiflora (Peruvian dodder)).